The primary structure comprises 625 residues: Coagulation factor XI (625 aa).

The signal sequence occupies residues Met1–Gly18. Apple domains lie at Cys20–Cys103, Cys110–Cys193, Cys200–Cys283, and Cys291–Cys374. Cystine bridges form between Cys20/Cys103, Cys46/Cys76, Cys50/Cys56, Cys110/Cys193, Cys136/Cys165, Cys140/Cys146, Cys200/Cys283, Cys226/Cys255, Cys230/Cys236, Cys291/Cys374, Cys317/Cys346, Cys321/Cys327, Cys380/Cys500, Cys416/Cys432, Cys514/Cys581, Cys545/Cys560, and Cys571/Cys599. Asn90 and Asn126 each carry an N-linked (GlcNAc...) (complex) asparagine glycan. Asn163 carries an N-linked (GlcNAc...) (complex) asparagine; atypical glycan. The 236-residue stretch at Ile388–Gln623 folds into the Peptidase S1 domain. Residue His431 is the Charge relay system of the active site. The N-linked (GlcNAc...) (complex) asparagine glycan is linked to Asn450. Residue Asp480 is the Charge relay system of the active site. A glycan (N-linked (GlcNAc...) (complex) asparagine) is linked at Asn491. Lys547 to Arg550 is a binding site for heparin. Ser575 acts as the Charge relay system in catalysis.

This sequence belongs to the peptidase S1 family. Plasma kallikrein subfamily. As to quaternary structure, homodimer; disulfide-linked. Can form non-covalently bonded homodimers. After activation the heavy and light chains are also linked by a disulfide bond. Interacts (activated) with F9 (inactive and activated) in calcium-dependent manner. Forms a heterodimer with SERPINA5. Interacts with Anopheles gambiae D7L2. Interacts (activated) with guianensin, an anticoagulant protein from Simulium guianense saliva. N-glycosylated on both chains. N-glycosylated sites mainly consist of nonfucosylated sialylated biantennary (in high abundance) and/or triantennary (in low abundance) complex structures. Glycosylation at Asn-163 uses a rare non-canonical Asn-X-Cys glycosite. Post-translationally, activated by factor XIIa (or XII), which cleaves each polypeptide after Arg-387 into the light chain, which contains the active site, and the heavy chain, which associates with high molecular weight (HMW) kininogen. Activated by F12 (activated); the presence of negatively charged surfaces accelerates activation. Activated by F2 (thrombin); the presence of negatively charged surfaces, such as polyphosphate and dextran sulfate, strongly accelerates activation. Autoactivated; the presence of negatively charged surfaces, such as polyphosphate and dextran sulfate, accelerates autoactivation and autolysis. Isoform 2 is produced by platelets and megakaryocytes but absent from other blood cells.

Its subcellular location is the secreted. The catalysed reaction is Selective cleavage of Arg-|-Ala and Arg-|-Val bonds in factor IX to form factor IXa.. Its activity is regulated as follows. Inhibited by SERPINA5. Functionally, factor XI triggers the middle phase of the intrinsic pathway of blood coagulation by activating factor IX. The protein is Coagulation factor XI (F11) of Homo sapiens (Human).